A 63-amino-acid polypeptide reads, in one-letter code: Putative flagellar calcium-binding protein (63 aa).

A compositionally biased stretch (polar residues) spans 1 to 11 (MGCISSKSTQT). The interval 1-23 (MGCISSKSTQTGKKEGKTAAERK) is disordered. Basic and acidic residues predominate over residues 12-23 (GKKEGKTAAERK). The EF-hand domain occupies 40-63 (EDKARRIELFKKFDKNNTGKLSME). Ca(2+) contacts are provided by Asp53, Asn55, Thr57, and Lys59.

Belongs to the calflagin family.

The protein resides in the cell projection. The protein localises to the cilium. Its subcellular location is the flagellum. The chain is Putative flagellar calcium-binding protein (CABP) from Crithidia fasciculata.